The chain runs to 134 residues: Phospholipase A2 (134 aa).

Positions 8, 10, and 12 each coordinate Ca(2+). Cystine bridges form between Cys-9–Cys-31, Cys-30–Cys-70, Cys-37–Cys-63, Cys-61–Cys-95, and Cys-105–Cys-113. N-linked (GlcNAc...) asparagine glycosylation occurs at Asn-13. His-34 is a catalytic residue. Asp-35 lines the Ca(2+) pocket. The active site involves Asp-64.

Belongs to the phospholipase A2 family. Group III subfamily. Requires Ca(2+) as cofactor. Expressed by the venom gland.

Its subcellular location is the secreted. The enzyme catalyses a 1,2-diacyl-sn-glycero-3-phosphocholine + H2O = a 1-acyl-sn-glycero-3-phosphocholine + a fatty acid + H(+). Functionally, PLA2 catalyzes the calcium-dependent hydrolysis of the 2-acyl groups in 3-sn-phosphoglycerides. This is Phospholipase A2 from Apis dorsata (Giant honeybee).